A 161-amino-acid chain; its full sequence is Large ribosomal subunit protein uL15 (161 aa).

The interval 1–43 (MKLSDIADNAGARKKRMRVGRGIGSGKGKTSGRGGKGQTARSG) is disordered. The segment covering 21–37 (RGIGSGKGKTSGRGGKG) has biased composition (gly residues).

The protein belongs to the universal ribosomal protein uL15 family. In terms of assembly, part of the 50S ribosomal subunit.

Its function is as follows. Binds to the 23S rRNA. This is Large ribosomal subunit protein uL15 from Bradyrhizobium sp. (strain BTAi1 / ATCC BAA-1182).